Consider the following 585-residue polypeptide: MGLLTKVATSRQFSTTRCVAKKLNKYSYIITEPKGQGASQAMLYATGFKKEDFKKPQVGVGSCWWSGNPCNMHLLDLNNRCSQSIEKAGLKAMQFNTIGVSDGISMGTKGMRYSLQSREIIADSFETIMMAQHYDANIAIPSCDKNMPGVMMAMGRHNRPSIMVYGGTILPGHPTCGSSKISKNIDIVSAFQSYGEYISKQFTEEEREDVVEHACPGPGSCGGMYTANTMASAAEVLGLTIPNSSSFPAVSKEKLAECDNIGEYIKKTMELGILPRDILTKEAFENAITYVVATGGSTNAVLHLVAVAHSAGVKLSPDDFQRISDTTPLIGDFKPSGKYVMADLINVGGTQSVIKYLYENNMLHGNTMTVTGDTLAERAKKAPSLPEGQEIIKPLSHPIKANGHLQILYGSLAPGGAVGKITGKEGTYFKGRARVFEEEGAFIEALERGEIKKGEKTVVVIRYEGPRGAPGMPEMLKPSSALMGYGLGKDVALLTDGRFSGGSHGFLIGHIVPEAAEGGPIGLVRDGDEIIIDADNNKIDLLVSDKEMAQRKQSWVAPPPRYTRGTLSKYAKLVSNASNGCVLDA.

The transit peptide at 1-20 (MGLLTKVATSRQFSTTRCVA) directs the protein to the mitochondrion. Position 70 (C70) interacts with [2Fe-2S] cluster. D102 contacts Mg(2+). [2Fe-2S] cluster is bound at residue C143. D144 provides a ligand contact to Mg(2+). C221 contacts [2Fe-2S] cluster. E474 lines the Mg(2+) pocket. The active-site Proton acceptor is the S500.

It belongs to the IlvD/Edd family. [2Fe-2S] cluster serves as cofactor. Requires Mg(2+) as cofactor.

It is found in the mitochondrion. The catalysed reaction is (2R)-2,3-dihydroxy-3-methylbutanoate = 3-methyl-2-oxobutanoate + H2O. It carries out the reaction (2R,3R)-2,3-dihydroxy-3-methylpentanoate = (S)-3-methyl-2-oxopentanoate + H2O. The protein operates within amino-acid biosynthesis; L-isoleucine biosynthesis; L-isoleucine from 2-oxobutanoate: step 3/4. It participates in amino-acid biosynthesis; L-valine biosynthesis; L-valine from pyruvate: step 3/4. With respect to regulation, catalytic activity is inactivated under iron-limiting conditions. Its function is as follows. Dihydroxyacid dehydratase that catalyzes the third step in the common pathway leading to biosynthesis of branched-chain amino acids. Catalyzes the dehydration of (2R,3R)-2,3-dihydroxy-3-methylpentanoate (2,3-dihydroxy-3-methylvalerate) into 2-oxo-3-methylpentanoate (2-oxo-3-methylvalerate) and of (2R)-2,3-dihydroxy-3-methylbutanoate (2,3-dihydroxyisovalerate) into 2-oxo-3-methylbutanoate (2-oxoisovalerate), the penultimate precursor to L-isoleucine and L-valine, respectively. Required for the synthesis of alpha-isopropylmalate which modulates the activity of LEU3 and subsequently regulates the expression of LEU1. This is Dihydroxy-acid dehydratase, mitochondrial from Saccharomyces cerevisiae (strain ATCC 204508 / S288c) (Baker's yeast).